Reading from the N-terminus, the 443-residue chain is Thymidine phosphorylase (443 aa).

It belongs to the thymidine/pyrimidine-nucleoside phosphorylase family. As to quaternary structure, homodimer.

It carries out the reaction thymidine + phosphate = 2-deoxy-alpha-D-ribose 1-phosphate + thymine. The protein operates within pyrimidine metabolism; dTMP biosynthesis via salvage pathway; dTMP from thymine: step 1/2. In terms of biological role, the enzymes which catalyze the reversible phosphorolysis of pyrimidine nucleosides are involved in the degradation of these compounds and in their utilization as carbon and energy sources, or in the rescue of pyrimidine bases for nucleotide synthesis. The polypeptide is Thymidine phosphorylase (Shewanella oneidensis (strain ATCC 700550 / JCM 31522 / CIP 106686 / LMG 19005 / NCIMB 14063 / MR-1)).